The primary structure comprises 406 residues: MRRVSVSDPLPFSAPLAAGGEALSTSALPAGVRDVLPAEWERREHLRSHLSALLRSWGYRGVDLPALELADPAHPQGNHAFKLIDSGGQVLALRSEYTTALGRLVGTHFPSGPFPLRLQYGGRLWLRTQTSELGRLREFNQVGAELIGVTGVQADAELLALAHAALGQAGVQAQLEVGFPGFVDAALTDAGLPGPVRAALHDAIDRKSGADLDLLARQHGVSPEVTRTLHSLTELYGGPEVLTEARVLARGVRAEQAVEHLSAVHAAAQEAGVELLFDLGVSRRYGYYTGLTFRAYVDGINQPVLGGGRYALPGGLPGAGFAIGLERLAAVMPAGVPSEPETVLALDFAAATAARAAGLGAELAWTGDEAELRHYAQARGLRRWVQGAELRDVTPADLKIATEVNA.

It belongs to the class-II aminoacyl-tRNA synthetase family. HisZ subfamily. Heteromultimer composed of HisG and HisZ subunits.

The protein resides in the cytoplasm. It participates in amino-acid biosynthesis; L-histidine biosynthesis; L-histidine from 5-phospho-alpha-D-ribose 1-diphosphate: step 1/9. Functionally, required for the first step of histidine biosynthesis. May allow the feedback regulation of ATP phosphoribosyltransferase activity by histidine. The chain is ATP phosphoribosyltransferase regulatory subunit (hisZ) from Deinococcus radiodurans (strain ATCC 13939 / DSM 20539 / JCM 16871 / CCUG 27074 / LMG 4051 / NBRC 15346 / NCIMB 9279 / VKM B-1422 / R1).